Consider the following 497-residue polypeptide: GTPase-activating protein GYP8 (497 aa).

The Rab-GAP TBC domain occupies 69-281; that stretch reads FVNNSLRKDC…QIFDMTISMQ (213 aa).

In Saccharomyces cerevisiae (strain ATCC 204508 / S288c) (Baker's yeast), this protein is GTPase-activating protein GYP8 (GYP8).